We begin with the raw amino-acid sequence, 538 residues long: Bifunctional purine biosynthesis protein PurH (538 aa).

Positions K6–V158 constitute an MGS-like domain.

The protein belongs to the PurH family.

It carries out the reaction (6R)-10-formyltetrahydrofolate + 5-amino-1-(5-phospho-beta-D-ribosyl)imidazole-4-carboxamide = 5-formamido-1-(5-phospho-D-ribosyl)imidazole-4-carboxamide + (6S)-5,6,7,8-tetrahydrofolate. The enzyme catalyses IMP + H2O = 5-formamido-1-(5-phospho-D-ribosyl)imidazole-4-carboxamide. It participates in purine metabolism; IMP biosynthesis via de novo pathway; 5-formamido-1-(5-phospho-D-ribosyl)imidazole-4-carboxamide from 5-amino-1-(5-phospho-D-ribosyl)imidazole-4-carboxamide (10-formyl THF route): step 1/1. Its pathway is purine metabolism; IMP biosynthesis via de novo pathway; IMP from 5-formamido-1-(5-phospho-D-ribosyl)imidazole-4-carboxamide: step 1/1. This Brucella abortus (strain S19) protein is Bifunctional purine biosynthesis protein PurH.